The sequence spans 750 residues: 1,4-alpha-glucan branching enzyme GlgB (750 aa).

The Nucleophile role is filled by Asp425. Glu478 functions as the Proton donor in the catalytic mechanism.

Belongs to the glycosyl hydrolase 13 family. GlgB subfamily. Monomer.

The enzyme catalyses Transfers a segment of a (1-&gt;4)-alpha-D-glucan chain to a primary hydroxy group in a similar glucan chain.. It functions in the pathway glycan biosynthesis; glycogen biosynthesis. Its function is as follows. Catalyzes the formation of the alpha-1,6-glucosidic linkages in glycogen by scission of a 1,4-alpha-linked oligosaccharide from growing alpha-1,4-glucan chains and the subsequent attachment of the oligosaccharide to the alpha-1,6 position. The chain is 1,4-alpha-glucan branching enzyme GlgB from Cupriavidus pinatubonensis (strain JMP 134 / LMG 1197) (Cupriavidus necator (strain JMP 134)).